A 243-amino-acid chain; its full sequence is Homeobox protein nob-1 (243 aa).

Polar residues predominate over residues 1-12 (MISVMQQMINND). Disordered regions lie at residues 1 to 23 (MISVMQQMINNDSPEDSKESITS) and 40 to 67 (SIQGESRSERESETGSSPQLAPSSTGMV). Residues 162–221 (GKKKRQPYKKDQISRLEYEYSVNQYLTNKRRSELSAQLMLDEKQVKVWFQNRRMKDKKLR) constitute a DNA-binding region (homeobox).

Belongs to the abd-b homeobox family. As to quaternary structure, interacts with nuclear receptor nhr-25. Interacts with geminin homolog gmn-1. Interacts with homeodomain protein ceh-20.

The protein resides in the nucleus. In terms of biological role, transcription factor, involved in posterior embryonic patterning, morphogenetic movements of the posterior hypodermis, and cell fate specification. Binds to the 5'-TAGT-3' motif in regulatory elements of genes, including Meis protein psa-3 and microRNA mir-57. Involved in a negative regulatory loop with mir-57 to specify posterior cell identities. Required for asymmetric division of the T hypodermal cell, acting via the regulation of asymmetric expression of psa-3 in cooperation with ceh-20 and the Wnt-MAPK pathway. Involved in the regulation of the onset of non-apoptotic cell death in the linker cell, acting together with the Wnt signaling pathway. Involved in promoting embryogenesis, in concert with orphan nuclear receptor nhr-25. May regulate expression of transcription factor dmd-3. In Caenorhabditis elegans, this protein is Homeobox protein nob-1.